A 332-amino-acid polypeptide reads, in one-letter code: MSTRKKKADAEVAQAATVAASPDIDVEELEGIGRVTGAKLKEKGYYTVRDVAYASVKELAEIVGSEERAQQIVEAARKMLGLHSFISALEVYERRKKIRRISTGVRALDELLGGGIETRAVTEVVGEFGSGKTQLCHQLAVMVQLPEDRGGLGAKAIYIDTENTFRPERIMQIAKARGLDPDQALNNIFYARAYSADHQMVLVEQAKSLIRQHNVALLVVDSVIAHFRAEFPGRENLAERQQKLNKHIADLLRLADAYDVAVVVTNQVMAQPDVFFGNPLRPAGGNILAHGATYRLWLRKSKENIRIAKIFDSPYHPEGEVSFRITEEGLVD.

126 to 133 (GEFGSGKT) is a binding site for ATP.

It belongs to the eukaryotic RecA-like protein family.

Involved in DNA repair and in homologous recombination. Binds and assemble on single-stranded DNA to form a nucleoprotein filament. Hydrolyzes ATP in a ssDNA-dependent manner and promotes DNA strand exchange between homologous DNA molecules. In Pyrobaculum calidifontis (strain DSM 21063 / JCM 11548 / VA1), this protein is DNA repair and recombination protein RadA.